A 363-amino-acid chain; its full sequence is GTP-binding protein 1 (363 aa).

One can recognise an OBG-type G domain in the interval 63-287 (ARVAFIGFPS…LKERIWEELN (225 aa)). GTP-binding positions include 69-76 (GFPSVGKS), 115-119 (DLPGI), and 246-249 (KIDA). Residues 287 to 362 (NLYRIYTKRK…EEGDVVTIVT (76 aa)) enclose the TGS domain.

It belongs to the TRAFAC class OBG-HflX-like GTPase superfamily. OBG GTPase family.

The sequence is that of GTP-binding protein 1 (gtp1) from Schizosaccharomyces pombe (strain 972 / ATCC 24843) (Fission yeast).